Here is a 273-residue protein sequence, read N- to C-terminus: Type II pantothenate kinase (273 aa).

8–15 (DAGGTLTK) serves as a coordination point for ATP. Glutamate 76 serves as the catalytic Proton acceptor. Residues threonine 105, 127–131 (GGTIM), phenylalanine 143, and serine 230 contribute to the ATP site.

Belongs to the type II pantothenate kinase family. Homodimer.

It is found in the cytoplasm. The catalysed reaction is (R)-pantothenate + ATP = (R)-4'-phosphopantothenate + ADP + H(+). It participates in cofactor biosynthesis; coenzyme A biosynthesis; CoA from (R)-pantothenate: step 1/5. Catalyzes the phosphorylation of pantothenate (Pan), the first step in CoA biosynthesis. In Bacillus cereus (strain ATCC 14579 / DSM 31 / CCUG 7414 / JCM 2152 / NBRC 15305 / NCIMB 9373 / NCTC 2599 / NRRL B-3711), this protein is Type II pantothenate kinase.